Here is a 325-residue protein sequence, read N- to C-terminus: Hydroxylase/desaturase poxK (325 aa).

Residues 1–12 (MTATATPVPTVA) show a composition bias toward low complexity. Positions 1–25 (MTATATPVPTVASHAQDITLPPPPK) are disordered.

The protein belongs to the asaB hydroxylase/desaturase family.

Its pathway is secondary metabolite biosynthesis. Its function is as follows. Hydroxylase/desaturase; part of the gene cluster that mediates the biosynthesis of oxaleimides, cytotoxic compounds containing an unusual disubstituted succinimide moiety. The first step of the pathway is provided by the HR-PKS poxF that serves in a new mode of collaborative biosynthesis with the PKS-NRPS poxE, by providing the olefin containing amino acid substrate via the synthesis of an ACP-bound dec-4-enoate. The cytochrome P450 monooxygenase poxM-catalyzed oxidation at the alpha-position creates the enzyme-bound 2-hydroxydec-4-enoyl-ACP thioester, which may be prone to spontaneous hydrolysis to yield 2-hydroxydec-4-enoic acid due to increased electrophilicity of the carbonyl. 2-hydroxydec-4-enoic acid can then be further oxidized by poxM to yield the alpha-ketoacid 2-oxodec-4-enoicacid, which is reductively aminated by the aminotransferase poxL to yield (S,E)-2-aminodec-4-enoic acid. The Hybrid PKS-NRPS synthetase poxE then performs condensation between the octaketide product of its PKS modules and the amino group of (S,E)-2-aminodec-4-enoic acid which is activated and incorporated by the adenylation domain. The resulting aminoacyl product can be cyclized by the Diels-Alderase PoxQ and reductively released by the reductive (R) domain of poxE to yield an aldehyde intermediate. The released aldehyde is then substrate for a Knoevenagel condensation by the hydrolyase poxO followed by an oxidation at the 5-position of the pyrrolidone ring. The presence of the olefin from the amino acid building block allows for migration of the substituted allyl group to occur. This allylic transposition reaction takes place in a conjugate addition, semipinacol-like fashion to yield a succinimide intermediate. Iterative two-electron oxidations of the C7 methyl of the succinimide intermediate to the carboxylic acid can be catalyzed by one of two remaining cytochrome P450 monooxygenasess poxC or poxD to yield oxaleimide A. Subsequent oxidation yields the maleimide scaffold oxaleimide I. Both oxaleimide A and oxaleimide I can undergo oxidative modifications in the decalin ring to yield the series of products oxaleimides B to H. In Penicillium oxalicum (strain 114-2 / CGMCC 5302) (Penicillium decumbens), this protein is Hydroxylase/desaturase poxK.